Here is a 187-residue protein sequence, read N- to C-terminus: Elongation factor P (187 aa).

Belongs to the elongation factor P family.

The protein resides in the cytoplasm. The protein operates within protein biosynthesis; polypeptide chain elongation. Involved in peptide bond synthesis. Stimulates efficient translation and peptide-bond synthesis on native or reconstituted 70S ribosomes in vitro. Probably functions indirectly by altering the affinity of the ribosome for aminoacyl-tRNA, thus increasing their reactivity as acceptors for peptidyl transferase. This chain is Elongation factor P, found in Rhodococcus erythropolis (strain PR4 / NBRC 100887).